Here is a 143-residue protein sequence, read N- to C-terminus: Nucleoside diphosphate kinase (143 aa).

ATP contacts are provided by Lys-11, Phe-59, Arg-87, Thr-93, Arg-104, and Asn-114. Residue His-117 is the Pros-phosphohistidine intermediate of the active site.

The protein belongs to the NDK family. Homotetramer. Mg(2+) is required as a cofactor.

It localises to the cytoplasm. The enzyme catalyses a 2'-deoxyribonucleoside 5'-diphosphate + ATP = a 2'-deoxyribonucleoside 5'-triphosphate + ADP. It catalyses the reaction a ribonucleoside 5'-diphosphate + ATP = a ribonucleoside 5'-triphosphate + ADP. Functionally, major role in the synthesis of nucleoside triphosphates other than ATP. The ATP gamma phosphate is transferred to the NDP beta phosphate via a ping-pong mechanism, using a phosphorylated active-site intermediate. The protein is Nucleoside diphosphate kinase of Shewanella frigidimarina (strain NCIMB 400).